Reading from the N-terminus, the 368-residue chain is MSNAPILLTPGPLTTSLRTRQAMLVDWGSWDRDFNQLTASVCEQLLAIIDGSASHHCVPLQGSGTFAVEAAIGTLVPRDGKVLVLINGAYGQRLAKICKVLGRNFSTFETAEDQPTTAADVDRLLAADPSVTHVALIHCETSTGILNPLHEIAQVIKRHGKRLIIDAMSSFGALPIDAREIPFEALIAASGKCLEGVPGMGFVFAEKTALAAAEGNAHSLAMDLHDQHAYMAKTGQWRFTPPTHVIAALHEALLQYAEEGGLPARHQRYADNCKTLLDGMAAIGLRSFLPADIQAPIIVTFHAPNDARYQFKDFYERVKAKGFILYPGKLTQVETFRVGCIGVVGPDGMQAAVNAVADVLREMEVLDI.

Lysine 192 carries the N6-(pyridoxal phosphate)lysine modification.

This sequence belongs to the class-V pyridoxal-phosphate-dependent aminotransferase family. PhnW subfamily. In terms of assembly, homodimer. Pyridoxal 5'-phosphate serves as cofactor.

It carries out the reaction (2-aminoethyl)phosphonate + pyruvate = phosphonoacetaldehyde + L-alanine. Its function is as follows. Involved in phosphonate degradation. This is 2-aminoethylphosphonate--pyruvate transaminase from Pseudomonas putida (strain W619).